The sequence spans 241 residues: ATP synthase subunit a (241 aa).

5 helical membrane passes run 30–50 (GQVF…VLVG), 89–109 (LPFI…GALI), 128–148 (INTT…AGLS), 193–213 (LAVG…VMLL), and 214–234 (GLFT…FYIG).

The protein belongs to the ATPase A chain family. In terms of assembly, F-type ATPases have 2 components, CF(1) - the catalytic core - and CF(0) - the membrane proton channel. CF(1) has five subunits: alpha(3), beta(3), gamma(1), delta(1), epsilon(1). CF(0) has four main subunits: a, b, b' and c.

It localises to the cellular thylakoid membrane. In terms of biological role, key component of the proton channel; it plays a direct role in the translocation of protons across the membrane. In Synechococcus sp. (strain CC9902), this protein is ATP synthase subunit a.